A 466-amino-acid chain; its full sequence is MVDGGGGASDLLVIFGITGDLARKMTFRALYRLERHQLLDCPILGVASDDMSVGQLVKWARESIGRTEKIDDAVFDRLAGRLSYLHGDVTDSQLYDSLAELIGSACRPLYYLEMPPALFAPIVENLANVRLLERARVAVEKPFGHDLASALELNARLRAVLGEDQILRVDHFLGKQPVVELEYLRFANQALAELWDRNSISEIHITMAEDFGVEDRGKFYDAVGALRDVVQNHLLQVLALVTMEPPVGSSADDLNDKKAEVFRAMAPLDPDRCVRGQYLGYTEVAGVASDSATETYVALRTEIDNWRWAGVPIFVRSGKELPAKVTEVRLFLRRVPALAFLPNRRPAEPNQIVLRIDPDPGMRLQISAHTDDSWRDIHLDSSFAVDLGEPIRPYERLLYAGLVGDHQLFAREDSIEQTWRIVQPLLDNPGEIHRYDRGSWGPEAAQSLLRGHRGWQSPWLPRGTDA.

Residues S48, 88–89, and K141 each bind NADP(+); that span reads DV. The substrate site is built by H171, K175, E209, and D228. The active-site Proton acceptor is H233. 2 residues coordinate substrate: K319 and K324.

It belongs to the glucose-6-phosphate dehydrogenase family.

It carries out the reaction D-glucose 6-phosphate + NADP(+) = 6-phospho-D-glucono-1,5-lactone + NADPH + H(+). It functions in the pathway carbohydrate degradation; pentose phosphate pathway; D-ribulose 5-phosphate from D-glucose 6-phosphate (oxidative stage): step 1/3. Functionally, catalyzes the oxidation of glucose 6-phosphate to 6-phosphogluconolactone. This is Glucose-6-phosphate 1-dehydrogenase 1 from Mycobacterium tuberculosis (strain CDC 1551 / Oshkosh).